The sequence spans 384 residues: 1-deoxy-D-xylulose 5-phosphate reductoisomerase (384 aa).

Positions 10, 11, 12, 13, 36, 38, and 122 each coordinate NADPH. Lys123 serves as a coordination point for 1-deoxy-D-xylulose 5-phosphate. Residue Glu124 coordinates NADPH. Asp148 serves as a coordination point for Mn(2+). The 1-deoxy-D-xylulose 5-phosphate site is built by Ser149, Glu150, Ser174, and His197. A Mn(2+)-binding site is contributed by Glu150. Gly203 serves as a coordination point for NADPH. The 1-deoxy-D-xylulose 5-phosphate site is built by Ser210, Asn215, Lys216, and Glu219. Position 219 (Glu219) interacts with Mn(2+).

It belongs to the DXR family. Requires Mg(2+) as cofactor. Mn(2+) is required as a cofactor.

The enzyme catalyses 2-C-methyl-D-erythritol 4-phosphate + NADP(+) = 1-deoxy-D-xylulose 5-phosphate + NADPH + H(+). It participates in isoprenoid biosynthesis; isopentenyl diphosphate biosynthesis via DXP pathway; isopentenyl diphosphate from 1-deoxy-D-xylulose 5-phosphate: step 1/6. Functionally, catalyzes the NADPH-dependent rearrangement and reduction of 1-deoxy-D-xylulose-5-phosphate (DXP) to 2-C-methyl-D-erythritol 4-phosphate (MEP). This is 1-deoxy-D-xylulose 5-phosphate reductoisomerase from Geotalea daltonii (strain DSM 22248 / JCM 15807 / FRC-32) (Geobacter daltonii).